Reading from the N-terminus, the 163-residue chain is Nucleotide-binding protein Clos_1967 (163 aa).

The protein belongs to the YajQ family.

In terms of biological role, nucleotide-binding protein. This is Nucleotide-binding protein Clos_1967 from Alkaliphilus oremlandii (strain OhILAs) (Clostridium oremlandii (strain OhILAs)).